The chain runs to 625 residues: 1-deoxy-D-xylulose-5-phosphate synthase 1 (625 aa).

Residues histidine 74 and 115–117 (GHT) contribute to the thiamine diphosphate site. Aspartate 146 contacts Mg(2+). Thiamine diphosphate contacts are provided by residues 147–148 (GS), asparagine 175, tyrosine 286, and glutamate 368. Asparagine 175 provides a ligand contact to Mg(2+).

This sequence belongs to the transketolase family. DXPS subfamily. In terms of assembly, homodimer. Mg(2+) serves as cofactor. Requires thiamine diphosphate as cofactor.

It catalyses the reaction D-glyceraldehyde 3-phosphate + pyruvate + H(+) = 1-deoxy-D-xylulose 5-phosphate + CO2. It functions in the pathway metabolic intermediate biosynthesis; 1-deoxy-D-xylulose 5-phosphate biosynthesis; 1-deoxy-D-xylulose 5-phosphate from D-glyceraldehyde 3-phosphate and pyruvate: step 1/1. Its function is as follows. Catalyzes the acyloin condensation reaction between C atoms 2 and 3 of pyruvate and glyceraldehyde 3-phosphate to yield 1-deoxy-D-xylulose-5-phosphate (DXP). The chain is 1-deoxy-D-xylulose-5-phosphate synthase 1 from Geobacter metallireducens (strain ATCC 53774 / DSM 7210 / GS-15).